Consider the following 348-residue polypeptide: MSQFVQSIIYENRTVTILDQTRLPEEEHYEIIHDLAQAIDAIKQLRVRGAPAISLFGGFVLVQEAFRTTGTLAEAKQELLEVSAQLLATRPTAVNLRNVLDELNQLIVSATTLKELPVRLEQKALELYQTDAKTSRQIGVHALELFESGDRVLTICNAGSIATAAYGTALAPFYLAKEQGIPLSVYASETRPLLQGARLTTWELQRAGIDVTLITDNMVAHTIKEKQITAIIVGADRITRNGDTANKIGTFQLALLARAFGIPFYVAAPLSTFDFTSLSGDEIEIEERDAREVTQLAGKATAPAGVPVFNPAFDVTPHDLITAIITELGVIEHPDVETIKRTIGQHTH.

Substrate contacts are provided by residues 48-50 (RGA), arginine 90, and glutamine 195. Aspartate 236 functions as the Proton donor in the catalytic mechanism. Substrate is bound at residue 246 to 247 (NK).

The protein belongs to the eIF-2B alpha/beta/delta subunits family. MtnA subfamily.

It catalyses the reaction 5-(methylsulfanyl)-alpha-D-ribose 1-phosphate = 5-(methylsulfanyl)-D-ribulose 1-phosphate. It participates in amino-acid biosynthesis; L-methionine biosynthesis via salvage pathway; L-methionine from S-methyl-5-thio-alpha-D-ribose 1-phosphate: step 1/6. In terms of biological role, catalyzes the interconversion of methylthioribose-1-phosphate (MTR-1-P) into methylthioribulose-1-phosphate (MTRu-1-P). The sequence is that of Methylthioribose-1-phosphate isomerase from Exiguobacterium sibiricum (strain DSM 17290 / CCUG 55495 / CIP 109462 / JCM 13490 / 255-15).